We begin with the raw amino-acid sequence, 218 residues long: Small ribosomal subunit protein uS3c (218 aa).

Residues 47 to 118 (VRKHIKSSSN…KLRMALTEVE (72 aa)) form the KH type-2 domain.

The protein belongs to the universal ribosomal protein uS3 family. As to quaternary structure, part of the 30S ribosomal subunit.

Its subcellular location is the plastid. It localises to the chloroplast. This Anthoceros angustus (Hornwort) protein is Small ribosomal subunit protein uS3c (rps3).